The primary structure comprises 183 residues: MLYKSSDRPAHKVSMLLLCHALAIAVVQIVIFSESWAFAKNINFYNVRPPLDPTPFPNSFKCFTCENAGDNYNCNRWAEDKWCPQNTQYCLTVHHFTSHGRSTSITKKCASRSECHFVGCHHSRDSEHTECRSCCEGMICNVELPTNHTNAVFAVMHAQRTSGSSAPTLYLPVLAWVFVLPLL.

The first 39 residues, 1-39 (MLYKSSDRPAHKVSMLLLCHALAIAVVQIVIFSESWAFA), serve as a signal peptide directing secretion. The region spanning 60–151 (FKCFTCENAG…VELPTNHTNA (92 aa)) is the UPAR/Ly6 domain. The tract at residues 60–154 (FKCFTCENAG…PTNHTNAVFA (95 aa)) is sufficient for inhibiting alpha-7 nAChR currents. 6 cysteine pairs are disulfide-bonded: cysteine 62-cysteine 90, cysteine 65-cysteine 74, cysteine 83-cysteine 109, cysteine 115-cysteine 134, cysteine 120-cysteine 131, and cysteine 135-cysteine 140. Serine 164 is lipidated: GPI-anchor amidated serine. The propeptide at 165–183 (SAPTLYLPVLAWVFVLPLL) is removed in mature form.

The protein resides in the cell membrane. In terms of biological role, likely acts as a modulator of nicotinic acetylcholine receptors (nAChRs) activity. In vitro acts on nAChRs in a subtype- and stoichiometry-dependent manner. Modulates specifically alpha-3(3):beta-4(2) nAChRs by enhancing the sensitivity to ACh, decreasing ACh-induced maximal current response and increasing the rate of desensitization to ACh; has no effect on alpha-7 homomeric nAChRs; modulates alpha-3(2):alpha-5:beta-4(2) nAChRs in the context of CHRNA5/alpha-5 variant Asn-398 but not its wild-type sequence. However, according to another report in vitro it can weakly inhibits alpha-7 nAChRs. The polypeptide is Ly6/PLAUR domain-containing protein 6B (LYPD6B) (Homo sapiens (Human)).